A 249-amino-acid chain; its full sequence is PF03932 family protein CutC (249 aa).

The protein belongs to the CutC family.

It localises to the cytoplasm. The protein is PF03932 family protein CutC of Bacteroides thetaiotaomicron (strain ATCC 29148 / DSM 2079 / JCM 5827 / CCUG 10774 / NCTC 10582 / VPI-5482 / E50).